The sequence spans 89 residues: Small ribosomal subunit protein uS15 (89 aa).

The protein belongs to the universal ribosomal protein uS15 family. Part of the 30S ribosomal subunit. Forms a bridge to the 50S subunit in the 70S ribosome, contacting the 23S rRNA.

Functionally, one of the primary rRNA binding proteins, it binds directly to 16S rRNA where it helps nucleate assembly of the platform of the 30S subunit by binding and bridging several RNA helices of the 16S rRNA. In terms of biological role, forms an intersubunit bridge (bridge B4) with the 23S rRNA of the 50S subunit in the ribosome. The polypeptide is Small ribosomal subunit protein uS15 (Proteus mirabilis (strain HI4320)).